A 540-amino-acid chain; its full sequence is Probable G-protein coupled receptor 75 (540 aa).

Positions 1–15 (MNSTGHLQDAPNATS) are enriched in polar residues. A disordered region spans residues 1–27 (MNSTGHLQDAPNATSLHVPHSQEGNST). Over 1 to 46 (MNSTGHLQDAPNATSLHVPHSQEGNSTSLQEGLQDLIHTATLVTCT) the chain is Extracellular. Asparagine 2, asparagine 12, and asparagine 25 each carry an N-linked (GlcNAc...) asparagine glycan. A helical membrane pass occupies residues 47-67 (FLLAVIFCLGSYGNFIVFLSF). At 68–86 (FDPAFRKFRTNFDFMILNL) the chain is on the cytoplasmic side. A helical transmembrane segment spans residues 87 to 107 (SFCDLFICGVTAPMFTFVLFF). Topologically, residues 108–120 (SSASSIPDAFCFT) are extracellular. The chain crosses the membrane as a helical span at residues 121–141 (FHLTSSGFIIMSLKTVAVIAL). Over 142–160 (HRLRMVLGKQPNRTASFPC) the chain is Cytoplasmic. A helical membrane pass occupies residues 161–181 (TVLLTLLLWATSFTLATLATL). The Extracellular segment spans residues 182–205 (KTSKSHLCLPMSSLIAGKGKAILS). A helical membrane pass occupies residues 206–226 (LYVVDFTFCVAVVSVSYIMIA). Residues 227–318 (QTLRKNAQVR…INLSTAKDSK (92 aa)) lie on the Cytoplasmic side of the membrane. Residues 319-339 (AVVTCVIIVLSVLVCCLPLGI) form a helical membrane-spanning segment. Topologically, residues 340-350 (SLVQVVLSSNG) are extracellular. Residues 351–371 (SFILYQFELFGFTLIFFKSGL) form a helical membrane-spanning segment. Topologically, residues 372–540 (NPFIYSRNSA…SAKQIPVPSV (169 aa)) are cytoplasmic.

This sequence belongs to the G-protein coupled receptor 1 family. Expressed at high levels in brain and spinal cord and at detectable levels in retinal pigment epithelium. In situ hybridization of adult eye sections localized transcripts only to the perivascular cells, surrounding retinal arterioles, in the ganglion cell/nerve fiber layer. Also expressed by islet cells (at protein level).

It localises to the cell membrane. In terms of biological role, g protein-coupled receptor that is activated by the chemokine CCL5/RANTES. Probably coupled to heterotrimeric Gq proteins, it stimulates inositol trisphosphate production and calcium mobilization upon activation. Together with CCL5/RANTES, may play a role in neuron survival through activation of a downstream signaling pathway involving the PI3, Akt and MAP kinases. CCL5/RANTES may also regulate insulin secretion by pancreatic islet cells through activation of this receptor. This Homo sapiens (Human) protein is Probable G-protein coupled receptor 75 (GPR75).